Consider the following 340-residue polypeptide: GTP 3',8-cyclase (340 aa).

The Radical SAM core domain maps to 20–246 (RFQRQYTYLR…PKAVNDGPAK (227 aa)). R29 is a binding site for GTP. The [4Fe-4S] cluster site is built by C36 and C40. Y42 provides a ligand contact to S-adenosyl-L-methionine. C43 lines the [4Fe-4S] cluster pocket. R79 lines the GTP pocket. G83 is a binding site for S-adenosyl-L-methionine. Residue T110 coordinates GTP. S134 is an S-adenosyl-L-methionine binding site. K171 is a GTP binding site. M205 is a binding site for S-adenosyl-L-methionine. The [4Fe-4S] cluster site is built by C268 and C271. A GTP-binding site is contributed by 273-275 (RLR). [4Fe-4S] cluster is bound at residue C285.

Belongs to the radical SAM superfamily. MoaA family. In terms of assembly, monomer and homodimer. The cofactor is [4Fe-4S] cluster.

It carries out the reaction GTP + AH2 + S-adenosyl-L-methionine = (8S)-3',8-cyclo-7,8-dihydroguanosine 5'-triphosphate + 5'-deoxyadenosine + L-methionine + A + H(+). It participates in cofactor biosynthesis; molybdopterin biosynthesis. In terms of biological role, catalyzes the cyclization of GTP to (8S)-3',8-cyclo-7,8-dihydroguanosine 5'-triphosphate. This is GTP 3',8-cyclase from Haemophilus ducreyi (strain 35000HP / ATCC 700724).